The following is a 54-amino-acid chain: MLQLVEESSKDAGIRXLVMLDEQGEQLERVVDEREQMAISGGFIRIMEKMLGSG.

Belongs to the SNAP-25 family. As to quaternary structure, part of the SNARE core complex containing SNAP25, VAMP2 and STX1A; this complex binds CPLX1. Found in a complex containing SYT1, SV2B and syntaxin-1. Found in a ternary complex with STX1A and VAMP8. Interacts with HSC70 and with SYT9, forming a complex with DNAJC5. The interaction with SYT9 is inhibited in presence of calcium. Isoform 1 and isoform 2 interact with BLOC1S6. Interacts with CENPF. Interacts with EQTN. Interacts with HGS. Interacts with KCNB1 (via N-terminus); reduces the voltage-dependent potassium channel KCNB1 activity in pancreatic beta cells. Interacts with OTOF. Interacts with RIMS1. Interacts with SNAPIN. Interacts with STXBP6. Interacts with TRIM9. Interacts with ZDHHC13 (via ANK repeats). Interacts with ZDHHC17 (via ANK repeats). Associates with the BLOC-1 complex. Interacts with PLCL1 (via C2 domain). Interacts with PRRT2; this interaction may impair the formation of the SNARE complex. Interacts with alpha-synuclein/SNCA. Interacts with PRPH2. Interacts with ROM1. Interacts with STX3. The N-terminus is blocked.

The protein localises to the cytoplasm. Its subcellular location is the perinuclear region. It localises to the cell membrane. It is found in the synapse. The protein resides in the synaptosome. The protein localises to the photoreceptor inner segment. In terms of biological role, t-SNARE involved in the molecular regulation of neurotransmitter release. May play an important role in the synaptic function of specific neuronal systems. Associates with proteins involved in vesicle docking and membrane fusion. Regulates plasma membrane recycling through its interaction with CENPF. Modulates the gating characteristics of the delayed rectifier voltage-dependent potassium channel KCNB1 in pancreatic beta cells. The chain is Synaptosomal-associated protein 25 (SNAP25) from Oryctolagus cuniculus (Rabbit).